A 315-amino-acid chain; its full sequence is GTP cyclohydrolase MptA 1 (315 aa).

The protein belongs to the GTP cyclohydrolase IV family. In terms of assembly, homodimer. It depends on Fe(2+) as a cofactor.

The catalysed reaction is GTP + H2O = 7,8-dihydroneopterin 2',3'-cyclic phosphate + formate + diphosphate + H(+). Its pathway is cofactor biosynthesis; 5,6,7,8-tetrahydromethanopterin biosynthesis. Functionally, converts GTP to 7,8-dihydro-D-neopterin 2',3'-cyclic phosphate, the first intermediate in the biosynthesis of coenzyme methanopterin. The protein is GTP cyclohydrolase MptA 1 of Methanocella arvoryzae (strain DSM 22066 / NBRC 105507 / MRE50).